The sequence spans 525 residues: MDKKQLEESVNNRRTFAIISHPDAGKTTITEQLLLFGGVVRKAGTVKAKKSGNFAKSDWMEIEKKRGISVTSSVMQFDYAGKRVNILDTPGHEDFSEDTYRTLMAVDSAVMVIDSAKGIEPQTKKLFQVCRMRGIPIFTFINKLDRDGREPLDLTAELEDVLGIESYAMNWPIGMGKGLKGLYDIYNHRIELYRSEDEGQAFLELDDNGEIKGDNPLKDESIYKQVLEEIELIEGAGSEFDEEKIAKGELTPVFFGSALTNFGVKTFLDAYLKYAPKPAAHKTEDGSEVEPDRKDFSGFIFKIQANMNPNHRDRIAFVRICSGEFDRGMDVFLERTGKKLRLSNSTQFMADTRETLETAVAGDIIGLYDTGNFQIGDSIYTGKKAVKFEKLPQFTPELFMRVTAKNVMKQKSFHKGIQQLVQEGAVQLYQSYSTGDYILGAVGQLQFEVFQFRMANEYNSEVVMTPMGHKIARWIDPEQLDEKMSSSRNLLVKDRAGMPLFLFENEFAERWFMDKYPDVKLTAKL.

In terms of domain architecture, tr-type G spans 11–279 (NNRRTFAIIS…AYLKYAPKPA (269 aa)). GTP is bound by residues 20 to 27 (SHPDAGKT), 88 to 92 (DTPGH), and 142 to 145 (NKLD).

This sequence belongs to the TRAFAC class translation factor GTPase superfamily. Classic translation factor GTPase family. PrfC subfamily.

The protein localises to the cytoplasm. Functionally, increases the formation of ribosomal termination complexes and stimulates activities of RF-1 and RF-2. It binds guanine nucleotides and has strong preference for UGA stop codons. It may interact directly with the ribosome. The stimulation of RF-1 and RF-2 is significantly reduced by GTP and GDP, but not by GMP. The chain is Peptide chain release factor 3 from Ligilactobacillus salivarius (strain UCC118) (Lactobacillus salivarius).